A 687-amino-acid polypeptide reads, in one-letter code: MGIDLNTVEEEAEEGAAAAVCGELWHACAGPGVALPRRGSALVYLPQAHLAADGGGGEVPPAGAAAVPPHVACRVVGVELRADAATDEVYARLALVAEGEMLQRNFREGGGEDGAGEMEGCDAEKKPRMPHMFCKTLTASDTSTHGGFSVPRRAAEDCFPPLDYKTVRPSQELIAVDLHGTQWKFRHIYRGQPRRHLLTIGWSSFVNRKKLVSGDAVLFLRGDDGQLRLGVRRAVQLRNEALFEPVNSSDSKLRILSSVASSLENKSVFHICFNPRSGASEFIVPYWRLLKSLNHPFSIGMRFRVCYESEDANERSAGLISGISEVDPIRWPGSRWKCLLVRWDDSTDSSHQNRVSPWEIERVGGSVSVTHSLSSGSKRTKLHFPQGSLDTPFLNGNGHPDSMGTENFHRVLQGQEFRGSRSHGVVCSESPGVPNFQSPDNRRFSADMRGYMMPASGPPQRNTEFTYQPIGFSESLGFPEVLQGQEMSQVVPLFRGATFGARTQNDRVVSANSVHRSAAQSGLLASTLGHPISQFTLSSSKVSSPSSVLMFNQATAPNHETVSGTNNKGMHVSQFASQEMLSETVTWPGTQRQTPSEITSNQFALARIPAPPSGAESGLPKRDAGRSSCRLFGFSLTGNMLGEDGEGLDDGAIEAGCENPPVLELFGHSHSTPGALHALCAAAPLGM.

A DNA-binding region (TF-B3) is located at residues 133–235 (FCKTLTASDT…QLRLGVRRAV (103 aa)).

This sequence belongs to the ARF family. Homo and heterodimers. Expressed in roots, culms, leaves and young panicles.

It is found in the nucleus. Its function is as follows. Auxin response factors (ARFs) are transcriptional factors that bind specifically to the DNA sequence 5'-TGTCTC-3' found in the auxin-responsive promoter elements (AuxREs). The protein is Auxin response factor 14 (ARF14) of Oryza sativa subsp. japonica (Rice).